The chain runs to 138 residues: Acidic phospholipase A2 BITP01A (138 aa).

Residues 1–16 (MRTLWIMAVLLVGVEG) form the signal peptide. 7 disulfides stabilise this stretch: C42–C131, C44–C60, C59–C111, C65–C138, C66–C104, C73–C97, and C91–C102. Positions 43, 45, and 47 each coordinate Ca(2+). H63 is a catalytic residue. Ca(2+) is bound at residue D64. D105 is a catalytic residue.

The cofactor is Ca(2+). In terms of tissue distribution, expressed by the venom gland.

It localises to the secreted. It carries out the reaction a 1,2-diacyl-sn-glycero-3-phosphocholine + H2O = a 1-acyl-sn-glycero-3-phosphocholine + a fatty acid + H(+). Its function is as follows. Snake venom phospholipase A2 (PLA2) that induces edema in mice, produces neuromuscular blockade in chick biventer cervicis, increases CK release and produces myonecrosis. PLA2 catalyzes the calcium-dependent hydrolysis of the 2-acyl groups in 3-sn-phosphoglycerides. The sequence is that of Acidic phospholipase A2 BITP01A from Bothrops insularis (Golden lancehead).